The following is a 192-amino-acid chain: Small ribosomal subunit protein uS5 (192 aa).

The 64-residue stretch at 22-85 (LVDKLVTINR…DRAKRAMIRV (64 aa)) folds into the S5 DRBM domain.

This sequence belongs to the universal ribosomal protein uS5 family. Part of the 30S ribosomal subunit. Contacts proteins S4 and S8.

Its function is as follows. With S4 and S12 plays an important role in translational accuracy. Functionally, located at the back of the 30S subunit body where it stabilizes the conformation of the head with respect to the body. The chain is Small ribosomal subunit protein uS5 from Gluconacetobacter diazotrophicus (strain ATCC 49037 / DSM 5601 / CCUG 37298 / CIP 103539 / LMG 7603 / PAl5).